The following is a 670-amino-acid chain: UvrABC system protein B (670 aa).

In terms of domain architecture, Helicase ATP-binding spans 26–183; that stretch reads EGLEDGLAHQ…RRLAELQYSR (158 aa). Residue 39–46 participates in ATP binding; the sequence is GVTGSGKT. The short motif at 92-115 is the Beta-hairpin element; it reads YYDYYQPEAYVPSSDTFIEKDASV. In terms of domain architecture, Helicase C-terminal spans 431–597; sequence QVDDLLSEIR…GLNKKISDIL (167 aa). The region spanning 630–665 is the UVR domain; the sequence is ELKIRELESKMLTHAQNLEFEEAAALRDELQALRAQ.

Belongs to the UvrB family. As to quaternary structure, forms a heterotetramer with UvrA during the search for lesions. Interacts with UvrC in an incision complex.

It is found in the cytoplasm. Functionally, the UvrABC repair system catalyzes the recognition and processing of DNA lesions. A damage recognition complex composed of 2 UvrA and 2 UvrB subunits scans DNA for abnormalities. Upon binding of the UvrA(2)B(2) complex to a putative damaged site, the DNA wraps around one UvrB monomer. DNA wrap is dependent on ATP binding by UvrB and probably causes local melting of the DNA helix, facilitating insertion of UvrB beta-hairpin between the DNA strands. Then UvrB probes one DNA strand for the presence of a lesion. If a lesion is found the UvrA subunits dissociate and the UvrB-DNA preincision complex is formed. This complex is subsequently bound by UvrC and the second UvrB is released. If no lesion is found, the DNA wraps around the other UvrB subunit that will check the other stand for damage. The sequence is that of UvrABC system protein B from Pectobacterium carotovorum subsp. carotovorum (strain PC1).